We begin with the raw amino-acid sequence, 635 residues long: Threonine--tRNA ligase (635 aa).

Residues 1–61 (MIKITLKDGK…HKDSSLEILT (61 aa)) enclose the TGS domain. A catalytic region spans residues 242 to 532 (DHRKLGKELD…LIEQYAGAFP (291 aa)). Positions 333, 384, and 509 each coordinate Zn(2+).

This sequence belongs to the class-II aminoacyl-tRNA synthetase family. In terms of assembly, homodimer. Zn(2+) serves as cofactor.

It is found in the cytoplasm. The catalysed reaction is tRNA(Thr) + L-threonine + ATP = L-threonyl-tRNA(Thr) + AMP + diphosphate + H(+). Catalyzes the attachment of threonine to tRNA(Thr) in a two-step reaction: L-threonine is first activated by ATP to form Thr-AMP and then transferred to the acceptor end of tRNA(Thr). Also edits incorrectly charged L-seryl-tRNA(Thr). The polypeptide is Threonine--tRNA ligase (Clostridium botulinum (strain 657 / Type Ba4)).